The sequence spans 1346 residues: Cytokinesis protein sepH (1346 aa).

Residues 1-50 (MVSRSNEGPEAPHPASRTPGAPAKGRLTRLGSSPSKRDDKAKDDRMGKTS) are disordered. Positions 35–50 (SKRDDKAKDDRMGKTS) are enriched in basic and acidic residues. In terms of domain architecture, Protein kinase spans 60-310 (YQLGDCLGRG…ARKLLKHPWI (251 aa)). ATP-binding positions include 66–74 (LGRGAFGSV) and lysine 89. Catalysis depends on aspartate 182, which acts as the Proton acceptor. 3 disordered regions span residues 342 to 380 (RSPE…PSPV), 446 to 497 (DESF…HMRR), and 1211 to 1295 (LCKL…AGAS). 2 stretches are compositionally biased toward polar residues: residues 477 to 489 (QQAN…SQNG) and 1220 to 1249 (RGST…NQSK).

This sequence belongs to the protein kinase superfamily. Ser/Thr protein kinase family. CDC7 subfamily. The cofactor is Mg(2+).

It catalyses the reaction L-seryl-[protein] + ATP = O-phospho-L-seryl-[protein] + ADP + H(+). The catalysed reaction is L-threonyl-[protein] + ATP = O-phospho-L-threonyl-[protein] + ADP + H(+). Functionally, required for early events during cytokinesis including localization of cytoskeletal components to the cytokinetic ring. The sequence is that of Cytokinesis protein sepH from Emericella nidulans (strain FGSC A4 / ATCC 38163 / CBS 112.46 / NRRL 194 / M139) (Aspergillus nidulans).